The chain runs to 447 residues: KICSTOR complex protein ITFG2 (447 aa).

The stretch at 19 to 48 is one FG-GAP 1; atypical repeat; the sequence is FPHAICLGDVDNDTLNELVVGDTSGKVSVY. At S104 the chain carries Phosphoserine. An FG-GAP 2; atypical repeat occupies 126 to 155; sequence NTKVMLISDIDGDGCRELVVGYTDRVVRAF. S220 bears the Phosphoserine mark.

In terms of assembly, part of the KICSTOR complex composed of KPTN, ITFG2, KICS2 and SZT2. SZT2 probably serves as a link between the other three proteins in the KICSTOR complex and may mediate the direct interaction with the GATOR complex via GATOR1. The KICSTOR complex interacts directly with the GATOR1 complex and most probably indirectly with the GATOR2 complex in an amino acid-independent manner.

It is found in the lysosome membrane. In terms of biological role, as part of the KICSTOR complex functions in the amino acid-sensing branch of the TORC1 signaling pathway. Recruits, in an amino acid-independent manner, the GATOR1 complex to the lysosomal membranes and allows its interaction with GATOR2 and the RAG GTPases. Functions upstream of the RAG GTPases and is required to negatively regulate mTORC1 signaling in absence of amino acids. In absence of the KICSTOR complex mTORC1 is constitutively localized to the lysosome and activated. The KICSTOR complex is also probably involved in the regulation of mTORC1 by glucose. This chain is KICSTOR complex protein ITFG2, found in Homo sapiens (Human).